We begin with the raw amino-acid sequence, 62 residues long: uncharacterized protein (62 aa).

This is an uncharacterized protein from Archaeoglobus fulgidus (strain ATCC 49558 / DSM 4304 / JCM 9628 / NBRC 100126 / VC-16).